The sequence spans 235 residues: UPF0173 metal-dependent hydrolase mll0680 (235 aa).

Belongs to the UPF0173 family.

The chain is UPF0173 metal-dependent hydrolase mll0680 from Mesorhizobium japonicum (strain LMG 29417 / CECT 9101 / MAFF 303099) (Mesorhizobium loti (strain MAFF 303099)).